The sequence spans 181 residues: MSRPAHKRPEYHKINKDLFVLTYGALVAQLCKDYEKDEDVNKYLDKMGYNIGTRLVEDFLARSCVRRCHSYSEIINIIAQVAFKMYLGITPSVTCHNSSRNEFSLILHKNPLAEFVEELPAGRSALCYCNLLCGIIRGALEMVHLAANVTFLQDRLKGDSVTEIGITFLKKLDEKKYRRKK.

Residue cysteine 68 is the site of S-palmitoyl cysteine attachment.

This sequence belongs to the TRAPP small subunits family. BET3 subfamily. In terms of assembly, homodimer. Component of the multisubunit TRAPP (transport protein particle) complex, which includes at least TRAPPC2, TRAPPC2L, TRAPPC3, TRAPPC3L, TRAPPC4, TRAPPC5, TRAPPC8, TRAPPC9, TRAPPC10, TRAPPC11 and TRAPPC12.

It localises to the golgi apparatus. It is found in the cis-Golgi network. The protein localises to the endoplasmic reticulum. May play a role in vesicular transport from endoplasmic reticulum to Golgi. In Mus musculus (Mouse), this protein is Trafficking protein particle complex subunit 3-like protein (Trappc3l).